The following is a 61-amino-acid chain: Large ribosomal subunit protein bL28 (61 aa).

It belongs to the bacterial ribosomal protein bL28 family.

The chain is Large ribosomal subunit protein bL28 from Geobacillus thermodenitrificans (strain NG80-2).